The sequence spans 442 residues: Thymidine phosphorylase (442 aa).

It belongs to the thymidine/pyrimidine-nucleoside phosphorylase family. As to quaternary structure, homodimer.

The catalysed reaction is thymidine + phosphate = 2-deoxy-alpha-D-ribose 1-phosphate + thymine. It functions in the pathway pyrimidine metabolism; dTMP biosynthesis via salvage pathway; dTMP from thymine: step 1/2. Its function is as follows. The enzymes which catalyze the reversible phosphorolysis of pyrimidine nucleosides are involved in the degradation of these compounds and in their utilization as carbon and energy sources, or in the rescue of pyrimidine bases for nucleotide synthesis. This Vibrio parahaemolyticus serotype O3:K6 (strain RIMD 2210633) protein is Thymidine phosphorylase.